A 338-amino-acid polypeptide reads, in one-letter code: Envelope glycoprotein K (338 aa).

Residues 1-30 form the signal peptide; it reads MLAVRSLQHLTTVIFITAYGLVLAWYIVFG. The Extracellular segment spans residues 31–121; it reads ASPLHRCIYA…VNCLEALWDT (91 aa). Residues 31–121 form an involved in fusion region; sequence ASPLHRCIYA…VNCLEALWDT (91 aa). Asn48 and Asn58 each carry an N-linked (GlcNAc...) asparagine; by host glycan. The chain crosses the membrane as a helical span at residues 122-140; the sequence is QMRLVVVGWFLYLAFVALH. Residues 141–212 lie on the Cytoplasmic side of the membrane; it reads QRRCMFGVVS…DPVTFLYHRP (72 aa). Residues 213–233 form a helical membrane-spanning segment; the sequence is AIGVIVGCELLLRFVALGLIV. Over 234–243 the chain is Extracellular; sequence GTALISRGAC. Residues 244–264 form a helical membrane-spanning segment; sequence AITHPLFLTITTWCFVSIIAL. Residues 265–301 are Cytoplasmic-facing; that stretch reads TELYFILRRGSAPKNAEPAAPRGRSKGWSGVCGRCCS. The interaction with UL20 stretch occupies residues 265–301; it reads TELYFILRRGSAPKNAEPAAPRGRSKGWSGVCGRCCS. A helical transmembrane segment spans residues 302 to 322; it reads IILSGIAVRLCYIAVVAGVVL. Residues 323–338 lie on the Extracellular side of the membrane; the sequence is VALRYEQEIQRRLFDL.

It belongs to the alphaherpesvirinae glycoprotein K family. In terms of assembly, interacts (via UL20 interaction region) with protein UL20 (via N-terminus); this interaction probably plays a role in the coordinate transport of protein UL20 and gK to the trans-Golgi network (TGN), and is required for the cell surface expression of gK. N-glycosylated.

The protein resides in the host cell membrane. Its subcellular location is the host endosome membrane. It is found in the host Golgi apparatus membrane. In terms of biological role, glycoprotein that probably modulates membrane fusion events during secondary envelopment of cytoplasmic capsids that bud into specific trans-Golgi network (TGN)-derived membranes. Also plays a role, together with gB, in virus-induced cell-to-cell fusion (syncytia formation). Seems to block fusion of virions with infected-cell membranes. This chain is Envelope glycoprotein K (gK), found in Human herpesvirus 2 (strain HG52) (HHV-2).